A 279-amino-acid chain; its full sequence is MAIKSYKPTTPSRRFYTNVENNDITSKPSVRSLLVKLPASAGRNNNGRITSRHREAGAKKLYRIIDFKRDKFGIAGTVSTVEYDPYRNCRIALITYVDGEKRYILLPKGLNVGDAIIADATGVDIKPGNAMKLMNIPVGTSVHNIELKVGKGGQMVRSAGTSAQIMGRDGKYVSLRMPSSEMRLVLGECMATVGAVGNEEYINIVLGKAGRTRHMGIRPQTRGSAMNPIDHPHGGGEGKTNSGRHPVTPWGKPTKGSKTRRKKASDKLIITRRKSNPKR.

The interval 218–279 (RPQTRGSAMN…ITRRKSNPKR (62 aa)) is disordered. Basic residues predominate over residues 255-279 (KGSKTRRKKASDKLIITRRKSNPKR).

It belongs to the universal ribosomal protein uL2 family. As to quaternary structure, part of the 50S ribosomal subunit. Forms a bridge to the 30S subunit in the 70S ribosome.

One of the primary rRNA binding proteins. Required for association of the 30S and 50S subunits to form the 70S ribosome, for tRNA binding and peptide bond formation. It has been suggested to have peptidyltransferase activity; this is somewhat controversial. Makes several contacts with the 16S rRNA in the 70S ribosome. The polypeptide is Large ribosomal subunit protein uL2 (Sulfurimonas denitrificans (strain ATCC 33889 / DSM 1251) (Thiomicrospira denitrificans (strain ATCC 33889 / DSM 1251))).